The sequence spans 312 residues: Olfactory receptor OR51C1 (312 aa).

At 1-26 the chain is on the extracellular side; the sequence is MGSNITSTSIIFLLTGVPGLEAFHTW. A helical membrane pass occupies residues 27–47; the sequence is ISIPFCFLSVTALLGNSLILF. The Cytoplasmic segment spans residues 48–66; the sequence is ATITQPSLHEPMYYFLSML. Residues 67–87 form a helical membrane-spanning segment; sequence SATDLGLSISTLVTMLSIFWF. The Extracellular portion of the chain corresponds to 88-99; that stretch reads NVREISFNACLS. C97 and C179 are joined by a disulfide. Residues 100-120 form a helical membrane-spanning segment; the sequence is HMFFIKFFTVMESSVLLAMAF. Over 121–143 the chain is Cytoplasmic; that stretch reads DRFVAVSNPLRYAMILTDSRIAQ. Residues 144 to 164 traverse the membrane as a helical segment; the sequence is IGVASVIRGLLMLTPMVALLI. The Extracellular segment spans residues 165-201; the sequence is RLSYCHSQVLHHSYCYHPDVMKLSCTDTRINSAVGLT. A helical membrane pass occupies residues 202 to 222; that stretch reads AMFSTVGVDLLLILLSYVLII. Residues 223 to 240 lie on the Cytoplasmic side of the membrane; the sequence is RTVLSVASPEERKETFST. Residues 241-261 traverse the membrane as a helical segment; sequence CVSHIVAFAIYYIPLISLSIV. Residues 262–273 lie on the Extracellular side of the membrane; that stretch reads HRFGKQAPAYVH. A helical transmembrane segment spans residues 274–294; it reads TMIANTYLLISPLMNPVIYSV. Over 295–312 the chain is Cytoplasmic; the sequence is KTKQIRRAVIKILHSKET.

This sequence belongs to the G-protein coupled receptor 1 family.

The protein resides in the membrane. In terms of biological role, odorant receptor. This chain is Olfactory receptor OR51C1, found in Homo sapiens (Human).